Reading from the N-terminus, the 89-residue chain is Small ribosomal subunit protein uS15 (89 aa).

The protein belongs to the universal ribosomal protein uS15 family. Part of the 30S ribosomal subunit. Forms a bridge to the 50S subunit in the 70S ribosome, contacting the 23S rRNA.

Its function is as follows. One of the primary rRNA binding proteins, it binds directly to 16S rRNA where it helps nucleate assembly of the platform of the 30S subunit by binding and bridging several RNA helices of the 16S rRNA. Forms an intersubunit bridge (bridge B4) with the 23S rRNA of the 50S subunit in the ribosome. The chain is Small ribosomal subunit protein uS15 from Paenarthrobacter aurescens (strain TC1).